A 120-amino-acid chain; its full sequence is Large ribosomal subunit protein uL18 (120 aa).

The protein belongs to the universal ribosomal protein uL18 family. As to quaternary structure, part of the 50S ribosomal subunit; part of the 5S rRNA/L5/L18/L25 subcomplex. Contacts the 5S and 23S rRNAs.

Functionally, this is one of the proteins that bind and probably mediate the attachment of the 5S RNA into the large ribosomal subunit, where it forms part of the central protuberance. This is Large ribosomal subunit protein uL18 from Maricaulis maris (strain MCS10) (Caulobacter maris).